The sequence spans 201 residues: Small ribosomal subunit protein uS4c (201 aa).

Residues 89–149 form the S4 RNA-binding domain; the sequence is MRLDNILFRL…DKPKSGALIK (61 aa).

Belongs to the universal ribosomal protein uS4 family. As to quaternary structure, part of the 30S ribosomal subunit. Contacts protein S5. The interaction surface between S4 and S5 is involved in control of translational fidelity.

The protein localises to the plastid. Its function is as follows. One of the primary rRNA binding proteins, it binds directly to 16S rRNA where it nucleates assembly of the body of the 30S subunit. With S5 and S12 plays an important role in translational accuracy. The polypeptide is Small ribosomal subunit protein uS4c (rps4) (Cuscuta reflexa (Southern Asian dodder)).